A 173-amino-acid chain; its full sequence is Small ribosomal subunit protein uS5 (173 aa).

An S5 DRBM domain is found at 17 to 80; it reads WQERVIQIRR…ADGKKQLIDV (64 aa).

It belongs to the universal ribosomal protein uS5 family. In terms of assembly, part of the 30S ribosomal subunit. Contacts proteins S4 and S8.

With S4 and S12 plays an important role in translational accuracy. In terms of biological role, located at the back of the 30S subunit body where it stabilizes the conformation of the head with respect to the body. This Crocosphaera subtropica (strain ATCC 51142 / BH68) (Cyanothece sp. (strain ATCC 51142)) protein is Small ribosomal subunit protein uS5.